The sequence spans 263 residues: Tetraspanin-7 (263 aa).

Residues 1–7 lie on the Cytoplasmic side of the membrane; it reads MVQCSNN. A helical membrane pass occupies residues 8 to 28; sequence LLGILNFFTFLLSIPILSAGI. Residues 29-45 are Extracellular-facing; that stretch reads WLGKNAATECERFLDKP. A helical membrane pass occupies residues 46–66; that stretch reads MVVLGIFLMFVSIAGLVGACC. Residues 67–75 lie on the Cytoplasmic side of the membrane; sequence RVSCLLWLY. The helical transmembrane segment at 76–96 threads the bilayer; the sequence is LFAMFLLILLGFCFTIFAFAV. Residues 97 to 234 are Extracellular-facing; it reads TNRGAGEVIS…NIKNSWKKVA (138 aa). Residue N180 is glycosylated (N-linked (GlcNAc...) asparagine). Residues 235–255 traverse the membrane as a helical segment; sequence KVNIVFLIFLIIVYSVGCCAF. The Cytoplasmic segment spans residues 256–263; that stretch reads RNNRKRSW.

It belongs to the tetraspanin (TM4SF) family.

The protein resides in the membrane. May be involved in the regulation of cell differentiation. This chain is Tetraspanin-7 (TET7), found in Arabidopsis thaliana (Mouse-ear cress).